The primary structure comprises 275 residues: MSAPVLLIDIGNTRLKWAWCNAGEVAVQEPGRLPTPWQHSGAVTHTDDSAMNTLAAVLRNLRGEGPVPSVWITNVAGPVIAGQVDAALNAAFGDGASVQWVRSAAAHGSLVSGYREPTQLGVDRWVGSIGAHRWLPGETLLIVTAGTATTLDIVTAQPGGQGRFEGGLILPGLALMLAALARNTAQLPALDVEDTGTAAASRLPWADNTHDAIAAGCLAAQAGAIERTWRTLSERGPTRCLLSGGARHALAGALAVPFEMHDNLVLLGLHAMATA.

9 to 16 (DIGNTRLK) lines the ATP pocket. Substrate-binding positions include Tyr114 and 121 to 124 (GVDR). The active-site Proton acceptor is the Asp123. Thr147 provides a ligand contact to ATP. Thr209 contacts substrate.

Belongs to the type III pantothenate kinase family. As to quaternary structure, homodimer. The cofactor is NH4(+). Requires K(+) as cofactor.

The protein resides in the cytoplasm. It carries out the reaction (R)-pantothenate + ATP = (R)-4'-phosphopantothenate + ADP + H(+). It participates in cofactor biosynthesis; coenzyme A biosynthesis; CoA from (R)-pantothenate: step 1/5. Its function is as follows. Catalyzes the phosphorylation of pantothenate (Pan), the first step in CoA biosynthesis. The polypeptide is Type III pantothenate kinase (Cupriavidus pinatubonensis (strain JMP 134 / LMG 1197) (Cupriavidus necator (strain JMP 134))).